Consider the following 206-residue polypeptide: Uridine kinase (206 aa).

11–18 (GGSGSGKT) contacts ATP.

It belongs to the uridine kinase family.

It localises to the cytoplasm. The catalysed reaction is uridine + ATP = UMP + ADP + H(+). It catalyses the reaction cytidine + ATP = CMP + ADP + H(+). It participates in pyrimidine metabolism; CTP biosynthesis via salvage pathway; CTP from cytidine: step 1/3. Its pathway is pyrimidine metabolism; UMP biosynthesis via salvage pathway; UMP from uridine: step 1/1. The sequence is that of Uridine kinase from Macrococcus caseolyticus (strain JCSC5402) (Macrococcoides caseolyticum).